Here is a 70-residue protein sequence, read N- to C-terminus: Small ribosomal subunit protein bS21 (70 aa).

Belongs to the bacterial ribosomal protein bS21 family.

This Nitratidesulfovibrio vulgaris (strain ATCC 29579 / DSM 644 / CCUG 34227 / NCIMB 8303 / VKM B-1760 / Hildenborough) (Desulfovibrio vulgaris) protein is Small ribosomal subunit protein bS21.